The chain runs to 1578 residues: Cilia- and flagella-associated protein 74 (1578 aa).

The span at 1 to 14 shows a compositional bias: acidic residues; the sequence is MEEPTVQFSDEDLV. Disordered regions lie at residues 1 to 21 and 33 to 67; these read MEEP…PPMD and EVER…TTKD. Residues 33–65 are compositionally biased toward basic and acidic residues; sequence EVERPSEGLEDEGSHSSAKKESKGAEKMRKSTT. Coiled-coil stretches lie at residues 103–156 and 330–378; these read RQRM…QSKI and KYLF…RRQH.

The protein belongs to the CFAP74 family.

Its subcellular location is the cytoplasm. It localises to the cytoskeleton. It is found in the cilium axoneme. The protein resides in the flagellum axoneme. As part of the central apparatus of the cilium axoneme may play a role in cilium movement. May play an important role in sperm architecture and function. This Mus musculus (Mouse) protein is Cilia- and flagella-associated protein 74.